The primary structure comprises 650 residues: ATP-dependent DNA helicase PIF1 (650 aa).

The interval Met-14–Gln-192 is PINT. A phosphoserine mark is found at Ser-40 and Ser-164. Residues Leu-171–Arg-199 are disordered. Residue Gly-237–Ser-244 participates in ATP binding. The DNA-binding element occupies Gln-586–Phe-605. The tract at residues Leu-631–Leu-650 is disordered. Residues Ser-633 to Leu-650 show a composition bias toward acidic residues.

It belongs to the helicase family. PIF1 subfamily. In terms of assembly, monomer. Interacts with telomerase. Requires Mg(2+) as cofactor.

Its subcellular location is the nucleus. The protein localises to the mitochondrion. It carries out the reaction Couples ATP hydrolysis with the unwinding of duplex DNA at the replication fork by translocating in the 5'-3' direction. This creates two antiparallel DNA single strands (ssDNA). The leading ssDNA polymer is the template for DNA polymerase III holoenzyme which synthesizes a continuous strand.. The catalysed reaction is ATP + H2O = ADP + phosphate + H(+). Functionally, DNA-dependent ATPase and 5'-3' DNA helicase required for the maintenance of both mitochondrial and nuclear genome stability. Efficiently unwinds G-quadruplex (G4) DNA structures and forked RNA-DNA hybrids. Resolves G4 structures, preventing replication pausing and double-strand breaks (DSBs) at G4 motifs. Involved in the maintenance of telomeric DNA. Inhibits telomere elongation, de novo telomere formation and telomere addition to DSBs via catalytic inhibition of telomerase. Reduces the processivity of telomerase by displacing active telomerase from DNA ends. Releases telomerase by unwinding the short telomerase RNA/telomeric DNA hybrid that is the intermediate in the telomerase reaction. Possesses an intrinsic strand annealing activity. This chain is ATP-dependent DNA helicase PIF1, found in Mus musculus (Mouse).